The primary structure comprises 65 residues: Conotoxin Am6.4 (65 aa).

Positions 1–33 (STGKRNAGKLTVTDDVEADRDTDPDDKDPSVHN) are disordered. The propeptide occupies 1-36 (STGKRNAGKLTVTDDVEADRDTDPDDKDPSVHNSWR). Positions 14 to 26 (DDVEADRDTDPDD) are enriched in acidic residues. Intrachain disulfides connect Cys-40/Cys-50, Cys-45/Cys-59, and Cys-49/Cys-64.

In terms of processing, is not hydroxylated. As to expression, expressed by the venom duct.

Its subcellular location is the secreted. In terms of biological role, probable toxin that inhibits ion channels. The polypeptide is Conotoxin Am6.4 (Conus amadis (Amadis cone)).